A 281-amino-acid chain; its full sequence is Probable endonuclease 4 (281 aa).

Zn(2+) is bound by residues His69, His109, Glu145, Asp179, His182, His216, Asp229, His231, and Glu261.

It belongs to the AP endonuclease 2 family. Requires Zn(2+) as cofactor.

The catalysed reaction is Endonucleolytic cleavage to 5'-phosphooligonucleotide end-products.. Its function is as follows. Endonuclease IV plays a role in DNA repair. It cleaves phosphodiester bonds at apurinic or apyrimidinic (AP) sites, generating a 3'-hydroxyl group and a 5'-terminal sugar phosphate. This chain is Probable endonuclease 4, found in Chlorobaculum parvum (strain DSM 263 / NCIMB 8327) (Chlorobium vibrioforme subsp. thiosulfatophilum).